Here is a 77-residue protein sequence, read N- to C-terminus: Acyl carrier protein (77 aa).

The Carrier domain maps to 2-77 (STIEERVKKV…EAIDYVVAHQ (76 aa)). An O-(pantetheine 4'-phosphoryl)serine modification is found at serine 37.

The protein belongs to the acyl carrier protein (ACP) family. Post-translationally, 4'-phosphopantetheine is transferred from CoA to a specific serine of apo-ACP by AcpS. This modification is essential for activity because fatty acids are bound in thioester linkage to the sulfhydryl of the prosthetic group.

The protein resides in the cytoplasm. It participates in lipid metabolism; fatty acid biosynthesis. Carrier of the growing fatty acid chain in fatty acid biosynthesis. The chain is Acyl carrier protein from Chromohalobacter salexigens (strain ATCC BAA-138 / DSM 3043 / CIP 106854 / NCIMB 13768 / 1H11).